Here is a 290-residue protein sequence, read N- to C-terminus: 4-hydroxy-tetrahydrodipicolinate synthase (290 aa).

A pyruvate-binding site is contributed by Thr44. The Proton donor/acceptor role is filled by Tyr132. Catalysis depends on Lys160, which acts as the Schiff-base intermediate with substrate. A pyruvate-binding site is contributed by Ile202.

Belongs to the DapA family. As to quaternary structure, homotetramer; dimer of dimers.

Its subcellular location is the cytoplasm. The catalysed reaction is L-aspartate 4-semialdehyde + pyruvate = (2S,4S)-4-hydroxy-2,3,4,5-tetrahydrodipicolinate + H2O + H(+). Its pathway is amino-acid biosynthesis; L-lysine biosynthesis via DAP pathway; (S)-tetrahydrodipicolinate from L-aspartate: step 3/4. Functionally, catalyzes the condensation of (S)-aspartate-beta-semialdehyde [(S)-ASA] and pyruvate to 4-hydroxy-tetrahydrodipicolinate (HTPA). The polypeptide is 4-hydroxy-tetrahydrodipicolinate synthase (Alkaliphilus oremlandii (strain OhILAs) (Clostridium oremlandii (strain OhILAs))).